An 85-amino-acid polypeptide reads, in one-letter code: Toxin AahP1005 (85 aa).

The N-terminal stretch at 1–19 (MNYLVMISLALLFMTGVES) is a signal peptide. One can recognise an LCN-type CS-alpha/beta domain in the interval 21–83 (KDGYIVDDKN…VSTKKKGGCN (63 aa)). Disulfide bonds link cysteine 31–cysteine 82, cysteine 35–cysteine 55, cysteine 41–cysteine 65, and cysteine 45–cysteine 67. Asparagine 83 carries the asparagine amide modification.

It belongs to the long (4 C-C) scorpion toxin superfamily. Sodium channel inhibitor family. Alpha subfamily. As to expression, expressed by the venom gland.

Its subcellular location is the secreted. In terms of biological role, alpha toxins bind voltage-independently at site-3 of sodium channels (Nav) and inhibit the inactivation of the activated channels, thereby blocking neuronal transmission. This is Toxin AahP1005 from Androctonus australis (Sahara scorpion).